Reading from the N-terminus, the 185-residue chain is Alkyl hydroperoxide reductase AhpD (185 aa).

The active-site Proton donor is the C131. A disulfide bridge connects residues C131 and C134. C134 functions as the Cysteine sulfenic acid (-SOH) intermediate in the catalytic mechanism.

This sequence belongs to the AhpD family. In terms of assembly, homotrimer.

The enzyme catalyses N(6)-[(R)-dihydrolipoyl]-L-lysyl-[lipoyl-carrier protein] + a hydroperoxide = N(6)-[(R)-lipoyl]-L-lysyl-[lipoyl-carrier protein] + an alcohol + H2O. Functionally, antioxidant protein with alkyl hydroperoxidase activity. Required for the reduction of the AhpC active site cysteine residues and for the regeneration of the AhpC enzyme activity. This chain is Alkyl hydroperoxide reductase AhpD, found in Frankia alni (strain DSM 45986 / CECT 9034 / ACN14a).